A 390-amino-acid polypeptide reads, in one-letter code: NADH-quinone oxidoreductase subunit D (390 aa).

The protein belongs to the complex I 49 kDa subunit family. NDH-1 is composed of 14 different subunits. Subunits NuoB, C, D, E, F, and G constitute the peripheral sector of the complex.

It localises to the cell membrane. It catalyses the reaction a quinone + NADH + 5 H(+)(in) = a quinol + NAD(+) + 4 H(+)(out). In terms of biological role, NDH-1 shuttles electrons from NADH, via FMN and iron-sulfur (Fe-S) centers, to quinones in the respiratory chain. The immediate electron acceptor for the enzyme in this species is believed to be ubiquinone. Couples the redox reaction to proton translocation (for every two electrons transferred, four hydrogen ions are translocated across the cytoplasmic membrane), and thus conserves the redox energy in a proton gradient. The protein is NADH-quinone oxidoreductase subunit D of Wolbachia pipientis wMel.